Reading from the N-terminus, the 206-residue chain is tRNA (guanine-N(7)-)-methyltransferase (206 aa).

Residues E37, E62, D89, and D112 each coordinate S-adenosyl-L-methionine. D112 is a catalytic residue. Residues K116 and D148 each coordinate substrate.

It belongs to the class I-like SAM-binding methyltransferase superfamily. TrmB family.

It catalyses the reaction guanosine(46) in tRNA + S-adenosyl-L-methionine = N(7)-methylguanosine(46) in tRNA + S-adenosyl-L-homocysteine. It functions in the pathway tRNA modification; N(7)-methylguanine-tRNA biosynthesis. In terms of biological role, catalyzes the formation of N(7)-methylguanine at position 46 (m7G46) in tRNA. This is tRNA (guanine-N(7)-)-methyltransferase from Myxococcus xanthus (strain DK1622).